The primary structure comprises 199 residues: LexA repressor (199 aa).

A DNA-binding region (H-T-H motif) is located at residues 28–47 (IRDIAKHFKLTPRGAHIHVI). Residues Ser-120 and Lys-157 each act as for autocatalytic cleavage activity in the active site.

It belongs to the peptidase S24 family. Homodimer.

It catalyses the reaction Hydrolysis of Ala-|-Gly bond in repressor LexA.. Functionally, represses a number of genes involved in the response to DNA damage (SOS response), including recA and lexA. In the presence of single-stranded DNA, RecA interacts with LexA causing an autocatalytic cleavage which disrupts the DNA-binding part of LexA, leading to derepression of the SOS regulon and eventually DNA repair. The protein is LexA repressor of Thermosipho melanesiensis (strain DSM 12029 / CIP 104789 / BI429).